Consider the following 515-residue polypeptide: MDEFHRYGKEDSSWQQCFLYPLFFQEDLYAISHDHYLDGSSSSEPMEHFSFNDQLSFLTVKRLIGRIREQNHSIGLFVNCDPNPLVDRNKSSYFESVLEGLTLVLEVPFSTRSKYSVQGIKEWKSFRSIHSIFPFLEEKFPHSNYILDTRIPYSIHPEFLVRTFRRWIQDAPSLHPLRSVLYEYRNSPENLQRSIIVAPRVNTRFFLFLWNHYAYECESILVPLLKRSFQSRSSSHGSFPERTLFDRKIKHIIRISHRNSLKSIWFLKDPKIHYVRYGERSIIAIKGTHLLVKKCRYYLPIFRQCYFHLWSEPYRVCSHQLSKNCSSFPGYSLGVRMKPLLVRTKMPGELFITDLITDEFYPIVPIVSIIGLLAREKFCDISGRPISKLAWTSLTDDDILDRFDRIWRNFFHYYSGSFGRDGLYRIKYILSLSCAKTLACKHKSTIRVVRKELGPELFKKSFSKEREFDSPAFSSKAVARSQRERIWHSDIPQINPLANSWQKIQDLKIKNLFDQ.

Belongs to the intron maturase 2 family. MatK subfamily.

Its subcellular location is the plastid. It is found in the chloroplast. In terms of biological role, usually encoded in the trnK tRNA gene intron. Probably assists in splicing its own and other chloroplast group II introns. The sequence is that of Maturase K from Cedrus atlantica (Atlas cedar).